The sequence spans 97 residues: NELL2-interacting cell ontogeny regulator 1 (97 aa).

The first 35 residues, Met1–Ala35, serve as a signal peptide directing secretion.

It belongs to the NICOL family. In terms of assembly, interacts with NELL2; triggers epididymal differentiation. Interacts with cell surface receptor TFRC; the interaction mediates uptake of NICOL1 into fibroblasts.

The protein resides in the secreted. It localises to the cytoplasm. The protein localises to the perinuclear region. MRNA-binding protein which interacts with a range of target mRNAs including SERPINE1, ACTA2, CCN2 and COL4A1 and may promote extracellular matrix production. Binds to the 3'-UTR of SERPINE1 mRNA and stabilizes the mRNA, possibly by competing for binding with SERBP1 and preventing SERBP1-mediated mRNA degradation. Also binds to the 3'-UTR of ACTA2. Testis-derived lumicrine factor that triggers epididymal differentiation and sperm maturation. This Bos taurus (Bovine) protein is NELL2-interacting cell ontogeny regulator 1.